The following is a 496-amino-acid chain: Probable CtpA-like serine protease (496 aa).

The interval 1 to 26 (MRKCFFMSHNPEEKQSNLDSNHKNES) is disordered. Positions 10–25 (NPEEKQSNLDSNHKNE) are enriched in basic and acidic residues. A helical transmembrane segment spans residues 39–59 (FILLLLGVVIITAGITVAATI). One can recognise a PDZ domain in the interval 124–206 (TKSFNEDVSG…TTVKLTIKRG (83 aa)). Residues Ser329, Asp340, and Lys354 each act as charge relay system in the active site.

This sequence belongs to the peptidase S41A family.

It is found in the cell membrane. This chain is Probable CtpA-like serine protease, found in Staphylococcus haemolyticus (strain JCSC1435).